A 765-amino-acid polypeptide reads, in one-letter code: MKLKGFLAVGVSVFGFSGLLMACSVVSQFDQVDDGKIKLASSLTSKRAAEALETVVKKYNDTKDPGDYPIEIVQIAGGYDGGKKDVQTKVSTKDKNNFYNLILNYPEIVSTLSRSKMALNFDGVNVDKLHPNFLSFNSRIGGIRDDGIYAIPISMSTDLMVINGPVLHYILNSARKEGTPTSTTVQATVSSRSAEKKGTLEIANDSETTKLWQNIQTTAQNNSNETTKEQKQVKRSSSSSSTTSTTGETKDTTKSDNKIKEFWGEYQEVDGGLKNFTFKASIFENWNETLDFATRIANSFPEKVKNITNKTGLDLQGVLGVDSSSNALYAAVFAAGQANYDNFFFNIDKRTGYADYSNFLNKDSSYQNLESVYNDFYKLIQANGLFVNRGGSYSSNFEKFHQLAFSVSSSGGYSYYFAKDNAKRLKFSNYAIEYPSFTQTIQAPNSSETESNLLGTFKLSEKDINLYKGSIPSGKQQGVDAILISNPNLINILEQAKQKNTAQGSESTTNKIIGYTTTANVNVDNQNIFSVSKLNNEQFQRKIIVNATEETLDQSQTLQSNESIVLPMPGKYKSTDKNKVMITQGPNLIGIHANEKENIETKKFVNWFLNQSITDWNSNNQQKNSDQTTKTAAEYFTDQASYILPLKEKFNKSSDLELKGSSSSSNLTTSSASASLLISNNSSTASSPAPKKTNNNSNTFTAKALELFQQAANNEIIPFSDPSDFRNGTFRNNISSSFNAAVNSKVSFNQFVQNFINSLGSGFRR.

The N-terminal stretch at 1 to 22 is a signal peptide; the sequence is MKLKGFLAVGVSVFGFSGLLMA. A lipid anchor (N-palmitoyl cysteine) is attached at cysteine 23. A lipid anchor (S-diacylglycerol cysteine) is attached at cysteine 23. 2 disordered regions span residues 177–203 and 218–255; these read EGTP…LEIA and TAQN…TTKS. A compositionally biased stretch (polar residues) spans 179–192; sequence TPTSTTVQATVSSR. The span at 236–247 shows a compositional bias: low complexity; sequence SSSSSSTTSTTG.

This sequence belongs to the MG185/MG260 family.

It is found in the cell membrane. This is an uncharacterized protein from Mycoplasma genitalium (strain ATCC 33530 / DSM 19775 / NCTC 10195 / G37) (Mycoplasmoides genitalium).